A 190-amino-acid polypeptide reads, in one-letter code: Protein GrpE (190 aa).

The segment at 21–49 (DDLQEEVEATETEETVEEVIEETPEKSEL) is disordered. Over residues 23-42 (LQEEVEATETEETVEEVIEE) the composition is skewed to acidic residues.

The protein belongs to the GrpE family. As to quaternary structure, homodimer.

The protein localises to the cytoplasm. Functionally, participates actively in the response to hyperosmotic and heat shock by preventing the aggregation of stress-denatured proteins, in association with DnaK and GrpE. It is the nucleotide exchange factor for DnaK and may function as a thermosensor. Unfolded proteins bind initially to DnaJ; upon interaction with the DnaJ-bound protein, DnaK hydrolyzes its bound ATP, resulting in the formation of a stable complex. GrpE releases ADP from DnaK; ATP binding to DnaK triggers the release of the substrate protein, thus completing the reaction cycle. Several rounds of ATP-dependent interactions between DnaJ, DnaK and GrpE are required for fully efficient folding. This Streptococcus pyogenes serotype M3 (strain SSI-1) protein is Protein GrpE.